The following is a 336-amino-acid chain: Fructose-1,6-bisphosphatase class 1 (336 aa).

Mg(2+)-binding residues include Glu90, Asp112, Leu114, and Asp115. Residues 115–118, Asn211, and Lys277 contribute to the substrate site; that span reads DGSS. Glu283 is a binding site for Mg(2+).

It belongs to the FBPase class 1 family. In terms of assembly, homotetramer. The cofactor is Mg(2+).

It localises to the cytoplasm. It catalyses the reaction beta-D-fructose 1,6-bisphosphate + H2O = beta-D-fructose 6-phosphate + phosphate. The protein operates within carbohydrate biosynthesis; gluconeogenesis. The protein is Fructose-1,6-bisphosphatase class 1 of Pseudomonas fluorescens (strain ATCC BAA-477 / NRRL B-23932 / Pf-5).